Consider the following 331-residue polypeptide: Glycerophosphodiester phosphodiesterase 1 (331 aa).

Residues 1–2 (MW) lie on the Cytoplasmic side of the membrane. A helical transmembrane segment spans residues 3-23 (LWEEQGGLMGPFSFLLLVLLL). Residues 24 to 254 (LTRSPFNACL…WKQSMFVALD (231 aa)) are Lumenal-facing. The GP-PDE domain maps to 65–331 (VSAIAHRGGS…SMLEDCTPEF (267 aa)). 2 residues coordinate Mg(2+): glutamate 97 and aspartate 99. Residue asparagine 168 is glycosylated (N-linked (GlcNAc...) asparagine). Aspartate 174 is a binding site for Mg(2+). Asparagine 198 carries N-linked (GlcNAc...) asparagine glycosylation. Residues 255 to 275 (ILLDWSMHNILWYLCGVSAFL) traverse the membrane as a helical segment. The Cytoplasmic portion of the chain corresponds to 276–331 (AQKDFISPDYVKKWSAKGIQVVAWTVNTFDEKSYYESHLGSSYITDSMLEDCTPEF).

The protein belongs to the glycerophosphoryl diester phosphodiesterase family. In terms of assembly, interacts with PRAF2. Interacts with RGS16. It depends on Mg(2+) as a cofactor. N-glycosylated.

The protein localises to the cell membrane. It localises to the cytoplasmic vesicle membrane. The enzyme catalyses sn-glycero-3-phospho-1D-myo-inositol + H2O = myo-inositol + sn-glycerol 3-phosphate + H(+). The catalysed reaction is 1-O-(1Z-octadecenyl)-sn-glycero-3-phospho-(N-5Z,8Z,11Z,14Z-eicosatetraenoyl)-ethanolamine + H2O = 1-O-(1Z-octadecenyl)-sn-glycero-3-phosphate + N-(5Z,8Z,11Z,14Z-eicosatetraenoyl)-ethanolamine + H(+). It carries out the reaction 1-O-(1Z-octadecenyl)-sn-glycero-3-phospho-(N-9Z-octadecenoyl)-ethanolamine + H2O = 1-O-(1Z-octadecenyl)-sn-glycero-3-phosphate + N-(9Z-octadecenoyl) ethanolamine + H(+). It catalyses the reaction 1-O-(1Z-octadecenyl)-sn-glycero-3-phospho-N-hexadecanoyl-ethanolamine + H2O = 1-O-(1Z-octadecenyl)-sn-glycero-3-phosphate + N-hexadecanoylethanolamine + H(+). The enzyme catalyses N-(4Z,7Z,10Z,13Z,16Z,19Z)-docosahexaenoyl-sn-glycero-3-phosphoethanolamine + H2O = N-(4Z,7Z,10Z,13Z,16Z,19Z)-docosahexaenoyl ethanolamine + sn-glycerol 3-phosphate + H(+). The catalysed reaction is N-eicosanoyl-sn-glycero-3-phosphoethanolamine + H2O = N-eicosanoyl ethanolamine + sn-glycerol 3-phosphate + H(+). It carries out the reaction N-hexadecanoyl-sn-glycero-3-phosphoethanolamine + H2O = N-hexadecanoylethanolamine + sn-glycerol 3-phosphate + H(+). It catalyses the reaction N-(9Z-octadecenoyl)-sn-glycero-3-phosphoethanolamine + H2O = N-(9Z-octadecenoyl) ethanolamine + sn-glycerol 3-phosphate + H(+). The enzyme catalyses N-(5Z,8Z,11Z,14Z-eicosatetraenoyl)-sn-glycero-3-phosphoethanolamine + H2O = N-(5Z,8Z,11Z,14Z-eicosatetraenoyl)-ethanolamine + sn-glycerol 3-phosphate + H(+). With respect to regulation, inhibited by EDTA, calcium chloride, and zinc chloride. Enhanced by magnesium chloride. Glycerophosphodiester phosphodiesterase activity can be modulated by G-protein signaling pathways. Its function is as follows. Hydrolyzes the phosphodiester bond of glycerophosphodiesters such as glycerophosphoinositol (GroPIns) and glycerophosphoethanolamine (GroPEth), to yield a glycerol phosphate and an alcohol. Hydrolyzes glycerophospho-N-acylethanolamines to N-acylethanolamines in the brain and participates in bioactive N-acylethanolamine biosynthesis such as anandamide (an endocannabinoid), N-palmitoylethanolamine (an anti-inflammatory), and N-oleoylethanolamine (an anorexic). In addition, has a lysophospholipase D activity by hydrolyzing N-acyl-lysoplasmenylethanolamine (N-acyl-lysoPlsEt) to N-acylethanolamine. However lysophospholipase D activity is lower than glycerophosphodiester phosphodiesterase activity. Has little or no activity towards glycerophosphocholine. The sequence is that of Glycerophosphodiester phosphodiesterase 1 from Bos taurus (Bovine).